A 161-amino-acid polypeptide reads, in one-letter code: SsrA-binding protein (161 aa).

This sequence belongs to the SmpB family.

It localises to the cytoplasm. Its function is as follows. Required for rescue of stalled ribosomes mediated by trans-translation. Binds to transfer-messenger RNA (tmRNA), required for stable association of tmRNA with ribosomes. tmRNA and SmpB together mimic tRNA shape, replacing the anticodon stem-loop with SmpB. tmRNA is encoded by the ssrA gene; the 2 termini fold to resemble tRNA(Ala) and it encodes a 'tag peptide', a short internal open reading frame. During trans-translation Ala-aminoacylated tmRNA acts like a tRNA, entering the A-site of stalled ribosomes, displacing the stalled mRNA. The ribosome then switches to translate the ORF on the tmRNA; the nascent peptide is terminated with the 'tag peptide' encoded by the tmRNA and targeted for degradation. The ribosome is freed to recommence translation, which seems to be the essential function of trans-translation. This Desulforamulus reducens (strain ATCC BAA-1160 / DSM 100696 / MI-1) (Desulfotomaculum reducens) protein is SsrA-binding protein.